Here is a 155-residue protein sequence, read N- to C-terminus: Large ribosomal subunit protein eL24 (155 aa).

The segment covering 94–129 has biased composition (basic and acidic residues); sequence RSLKPEVRKAQRDEKKKADKEKKKADKAARKSEKAK. The segment at 94-155 is disordered; that stretch reads RSLKPEVRKA…AFQKVAATSR (62 aa).

The protein belongs to the eukaryotic ribosomal protein eL24 family.

This chain is Large ribosomal subunit protein eL24 (RPL24), found in Kluyveromyces lactis (strain ATCC 8585 / CBS 2359 / DSM 70799 / NBRC 1267 / NRRL Y-1140 / WM37) (Yeast).